A 484-amino-acid polypeptide reads, in one-letter code: Zinc metalloproteinase-disintegrin BlatH1 (484 aa).

The signal sequence occupies residues 1–20 (MIQVLLVTICLAALPYQGSS). A propeptide spanning residues 21-190 (IILESGNVND…KKASQSNLTP (170 aa)) is cleaved from the precursor. A Pyrrolidone carboxylic acid (Glu) modification is found at glutamate 191. A Peptidase M12B domain is found at 199–395 (KYVELVIVAD…QNSQCILNEP (197 aa)). Glutamate 202 provides a ligand contact to Ca(2+). Asparagine 259 carries an N-linked (GlcNAc...) asparagine glycan. Aspartate 286 is a Ca(2+) binding site. A glycan (N-linked (GlcNAc...) asparagine) is linked at asparagine 297. 3 disulfides stabilise this stretch: cysteine 310–cysteine 390, cysteine 350–cysteine 374, and cysteine 352–cysteine 357. Residue histidine 335 participates in Zn(2+) binding. Glutamate 336 is an active-site residue. The Zn(2+) site is built by histidine 339 and histidine 345. Asparagine 373 is a glycosylation site (N-linked (GlcNAc...) asparagine). Ca(2+) is bound by residues cysteine 390, asparagine 393, valine 405, asparagine 408, glutamate 412, glutamate 415, and aspartate 418. In terms of domain architecture, Disintegrin spans 403 to 484 (PPVCGNEILE…GQSADCPSNG (82 aa)). 7 disulfides stabilise this stretch: cysteine 406-cysteine 425, cysteine 417-cysteine 435, cysteine 419-cysteine 430, cysteine 429-cysteine 452, cysteine 443-cysteine 449, cysteine 448-cysteine 473, and cysteine 461-cysteine 480. The TDN-tripeptide motif lies at 465-467 (TDN).

It belongs to the venom metalloproteinase (M12B) family. P-II subfamily. P-IIc sub-subfamily. As to quaternary structure, homodimer. Zn(2+) is required as a cofactor. The N-terminus is blocked. Expressed by the venom gland.

Its subcellular location is the secreted. Its activity is regulated as follows. Platelet aggregation in inhibited by the metalloproteinase inhibitors EDTA and Batimastat. The hemorrhagic activity is not inhibited by the plasma proteinase inhibitor alpha2-macroglobulin, although the SVMP is able to cleave this plasma inhibitor, generating a 90 kDa product. Its function is as follows. Snake venom zinc metalloprotease-disintegrin that hydrolyzes azocasein, gelatin and fibrinogen (Aalpha and Bbeta chains and partially gamma-chain), and exerts a potent local and systemic hemorrhagic activity in mice. It inhibits ADP- and collagen-induced human platelet aggregation (IC(50) = 0.3 uM and 0.7 uM for ADP and collagen, respectively). This inhibition is dependent of protease activity, and probably occurs through the degradation of an unknown platelet receptor. In Bothriechis lateralis (Side-striped palm pitviper), this protein is Zinc metalloproteinase-disintegrin BlatH1.